The following is a 160-amino-acid chain: Large ribosomal subunit protein uL22c (160 aa).

The protein belongs to the universal ribosomal protein uL22 family. In terms of assembly, part of the 50S ribosomal subunit.

Its subcellular location is the plastid. The protein localises to the chloroplast. In terms of biological role, this protein binds specifically to 23S rRNA. Its function is as follows. The globular domain of the protein is located near the polypeptide exit tunnel on the outside of the subunit, while an extended beta-hairpin is found that lines the wall of the exit tunnel in the center of the 70S ribosome. This chain is Large ribosomal subunit protein uL22c (rpl22), found in Capsella bursa-pastoris (Shepherd's purse).